The following is a 268-amino-acid chain: Glutamate racemase (268 aa).

Residues 14–15 (DS) and 46–47 (YG) each bind substrate. The active-site Proton donor/acceptor is cysteine 78. Substrate is bound at residue 79-80 (NS). Cysteine 190 (proton donor/acceptor) is an active-site residue. 191 to 192 (TH) lines the substrate pocket.

The protein belongs to the aspartate/glutamate racemases family.

The catalysed reaction is L-glutamate = D-glutamate. The protein operates within cell wall biogenesis; peptidoglycan biosynthesis. In terms of biological role, provides the (R)-glutamate required for cell wall biosynthesis. The chain is Glutamate racemase from Treponema pallidum (strain Nichols).